The following is an 873-amino-acid chain: Probable beta-glucosidase A (873 aa).

An N-terminal signal peptide occupies residues 1 to 19 (MRFGWLEVAALTAASVANA). N-linked (GlcNAc...) asparagine glycosylation is found at Asn71, Asn222, and Asn263. The active site involves Asp291. Residues Asn326, Asn333, Asn365, Asn453, Asn534, Asn553, Asn575, Asn679, and Asn725 are each glycosylated (N-linked (GlcNAc...) asparagine). The tract at residues 731-764 (DSSDDPNYGWQDSEYIPEGARDGSPQPLLKAGGA) is disordered.

Belongs to the glycosyl hydrolase 3 family.

The protein localises to the secreted. The catalysed reaction is Hydrolysis of terminal, non-reducing beta-D-glucosyl residues with release of beta-D-glucose.. It participates in glycan metabolism; cellulose degradation. In terms of biological role, beta-glucosidases are one of a number of cellulolytic enzymes involved in the degradation of cellulosic biomass. Catalyzes the last step releasing glucose from the inhibitory cellobiose. The chain is Probable beta-glucosidase A (bglA) from Aspergillus fumigatus (strain ATCC MYA-4609 / CBS 101355 / FGSC A1100 / Af293) (Neosartorya fumigata).